A 174-amino-acid chain; its full sequence is ATP synthase subunit d, mitochondrial (174 aa).

Ser2 is subject to N-acetylserine.

Belongs to the ATPase d subunit family. As to quaternary structure, F-type ATPases have 2 components, CF(1) - the catalytic core - and CF(0) - the membrane proton channel. In yeast, the dimeric form of ATP synthase consists of 17 polypeptides: alpha, beta, gamma, delta, epsilon, 4 (B), 5 (OSCP), 6 (A), 8, 9 (C), d, E (Tim11), f, g, h, i/j and k.

It is found in the mitochondrion. Its subcellular location is the mitochondrion inner membrane. Its function is as follows. Mitochondrial membrane ATP synthase (F(1)F(0) ATP synthase or Complex V) produces ATP from ADP in the presence of a proton gradient across the membrane which is generated by electron transport complexes of the respiratory chain. F-type ATPases consist of two structural domains, F(1) - containing the extramembraneous catalytic core, and F(0) - containing the membrane proton channel, linked together by a central stalk and a peripheral stalk. During catalysis, ATP synthesis in the catalytic domain of F(1) is coupled via a rotary mechanism of the central stalk subunits to proton translocation. Part of the complex F(0) domain and the peripheric stalk, which acts as a stator to hold the catalytic alpha(3)beta(3) subcomplex and subunit a/ATP6 static relative to the rotary elements. The chain is ATP synthase subunit d, mitochondrial (ATP7) from Saccharomyces cerevisiae (strain ATCC 204508 / S288c) (Baker's yeast).